A 400-amino-acid chain; its full sequence is Probable RNA polymerase sigma factor RfaY (400 aa).

Residues 62–75 (WQRLAQLHQPASFL) carry the Polymerase core binding motif. Residues 165–184 (SDAAVRKRLSRARATVRNEL) constitute a DNA-binding region (H-T-H motif).

It belongs to the sigma-70 factor family. ECF subfamily.

Functionally, sigma factors are initiation factors that promote the attachment of RNA polymerase to specific initiation sites and are then released. This sigma factor is involved in lipopolysaccharide biosynthesis and pathogenicity. In Xanthomonas campestris pv. campestris (strain ATCC 33913 / DSM 3586 / NCPPB 528 / LMG 568 / P 25), this protein is Probable RNA polymerase sigma factor RfaY (rfaY).